The following is a 353-amino-acid chain: 6-phosphogluconolactonase (353 aa).

The protein belongs to the cycloisomerase 2 family.

It localises to the cytoplasm. It catalyses the reaction 6-phospho-D-glucono-1,5-lactone + H2O = 6-phospho-D-gluconate + H(+). The protein operates within carbohydrate degradation; pentose phosphate pathway; D-ribulose 5-phosphate from D-glucose 6-phosphate (oxidative stage): step 2/3. In terms of biological role, carboxylic ester hydrolase that may be involved in ulvan degradation. Ulvan is the main polysaccharide component of the Ulvales (green seaweed) cell wall. It is composed of disaccharide building blocks comprising 3-sulfated rhamnose (Rha3S) linked to D-glucuronic acid (GlcA), L-iduronic acid (IduA), or D-xylose (Xyl). Catalyzes the hydrolysis of 6-phosphogluconolactone to 6-phosphogluconate. The sequence is that of 6-phosphogluconolactonase (pgl) from Formosa agariphila (strain DSM 15362 / KCTC 12365 / LMG 23005 / KMM 3901 / M-2Alg 35-1).